The following is a 476-amino-acid chain: Siroheme synthase (476 aa).

Positions 1 to 203 are precorrin-2 dehydrogenase /sirohydrochlorin ferrochelatase; sequence MNYFPVFADL…RQIEAAKKEL (203 aa). NAD(+)-binding positions include 22–23 and 43–44; these read TI and QK. Position 128 is a phosphoserine (serine 128). The interval 214 to 476 is uroporphyrinogen-III C-methyltransferase; it reads GSVSLVGAGP…LDSLRIERVA (263 aa). Residue proline 223 participates in S-adenosyl-L-methionine binding. Catalysis depends on aspartate 246, which acts as the Proton acceptor. Lysine 268 functions as the Proton donor in the catalytic mechanism. Residues 299–301, valine 304, 329–330, methionine 381, and glycine 410 each bind S-adenosyl-L-methionine; these read GGD and TA.

In the N-terminal section; belongs to the precorrin-2 dehydrogenase / sirohydrochlorin ferrochelatase family. The protein in the C-terminal section; belongs to the precorrin methyltransferase family.

It catalyses the reaction uroporphyrinogen III + 2 S-adenosyl-L-methionine = precorrin-2 + 2 S-adenosyl-L-homocysteine + H(+). The catalysed reaction is precorrin-2 + NAD(+) = sirohydrochlorin + NADH + 2 H(+). It carries out the reaction siroheme + 2 H(+) = sirohydrochlorin + Fe(2+). The protein operates within cofactor biosynthesis; adenosylcobalamin biosynthesis; precorrin-2 from uroporphyrinogen III: step 1/1. It functions in the pathway cofactor biosynthesis; adenosylcobalamin biosynthesis; sirohydrochlorin from precorrin-2: step 1/1. It participates in porphyrin-containing compound metabolism; siroheme biosynthesis; precorrin-2 from uroporphyrinogen III: step 1/1. Its pathway is porphyrin-containing compound metabolism; siroheme biosynthesis; siroheme from sirohydrochlorin: step 1/1. The protein operates within porphyrin-containing compound metabolism; siroheme biosynthesis; sirohydrochlorin from precorrin-2: step 1/1. Multifunctional enzyme that catalyzes the SAM-dependent methylations of uroporphyrinogen III at position C-2 and C-7 to form precorrin-2 via precorrin-1. Then it catalyzes the NAD-dependent ring dehydrogenation of precorrin-2 to yield sirohydrochlorin. Finally, it catalyzes the ferrochelation of sirohydrochlorin to yield siroheme. The protein is Siroheme synthase of Mannheimia succiniciproducens (strain KCTC 0769BP / MBEL55E).